The chain runs to 884 residues: Translation initiation factor IF-2 (884 aa).

Residues valine 93–glutamine 288 are disordered. Residues glutamate 99 to tryptophan 209 show a composition bias toward basic and acidic residues. Polar residues predominate over residues glutamine 216–histidine 229. A compositionally biased stretch (basic and acidic residues) spans arginine 231–arginine 246. Basic residues predominate over residues serine 247 to asparagine 261. Basic and acidic residues predominate over residues lysine 262 to alanine 275. The tr-type G domain maps to histidine 383–lysine 552. The segment at glycine 392–threonine 399 is G1. Glycine 392–threonine 399 contributes to the GTP binding site. The G2 stretch occupies residues glycine 417–histidine 421. The interval aspartate 438–glycine 441 is G3. GTP is bound by residues aspartate 438–histidine 442 and asparagine 492–aspartate 495. The interval asparagine 492–aspartate 495 is G4. The tract at residues serine 528–lysine 530 is G5.

Belongs to the TRAFAC class translation factor GTPase superfamily. Classic translation factor GTPase family. IF-2 subfamily.

Its subcellular location is the cytoplasm. One of the essential components for the initiation of protein synthesis. Protects formylmethionyl-tRNA from spontaneous hydrolysis and promotes its binding to the 30S ribosomal subunits. Also involved in the hydrolysis of GTP during the formation of the 70S ribosomal complex. This Yersinia pestis bv. Antiqua (strain Antiqua) protein is Translation initiation factor IF-2.